A 250-amino-acid chain; its full sequence is Ribosomal RNA small subunit methyltransferase J (250 aa).

Residues 101–102 (RD), 117–118 (ER), 153–154 (SS), and aspartate 171 contribute to the S-adenosyl-L-methionine site.

The protein belongs to the methyltransferase superfamily. RsmJ family.

Its subcellular location is the cytoplasm. It carries out the reaction guanosine(1516) in 16S rRNA + S-adenosyl-L-methionine = N(2)-methylguanosine(1516) in 16S rRNA + S-adenosyl-L-homocysteine + H(+). In terms of biological role, specifically methylates the guanosine in position 1516 of 16S rRNA. The polypeptide is Ribosomal RNA small subunit methyltransferase J (Escherichia coli (strain UTI89 / UPEC)).